A 188-amino-acid polypeptide reads, in one-letter code: Protein GrpE (188 aa).

Residues 1–30 (MTKKTSHHKAEQKEKRAGEESGRESEVLDH) form a disordered region. The span at 8–30 (HKAEQKEKRAGEESGRESEVLDH) shows a compositional bias: basic and acidic residues.

It belongs to the GrpE family. In terms of assembly, homodimer.

The protein resides in the cytoplasm. In terms of biological role, participates actively in the response to hyperosmotic and heat shock by preventing the aggregation of stress-denatured proteins, in association with DnaK and GrpE. It is the nucleotide exchange factor for DnaK and may function as a thermosensor. Unfolded proteins bind initially to DnaJ; upon interaction with the DnaJ-bound protein, DnaK hydrolyzes its bound ATP, resulting in the formation of a stable complex. GrpE releases ADP from DnaK; ATP binding to DnaK triggers the release of the substrate protein, thus completing the reaction cycle. Several rounds of ATP-dependent interactions between DnaJ, DnaK and GrpE are required for fully efficient folding. The chain is Protein GrpE from Chlorobium phaeobacteroides (strain BS1).